A 159-amino-acid polypeptide reads, in one-letter code: Na(+)/H(+) antiporter subunit E1 (159 aa).

Helical transmembrane passes span 1-21 (MAVQ…VTNS), 27-47 (FVLG…VLPG), 49-69 (FYVI…IELI), and 101-121 (WQIV…VLGV).

It belongs to the CPA3 antiporters (TC 2.A.63) subunit E family. In terms of assembly, may form a heterooligomeric complex that consists of seven subunits: mnhA1, mnhB1, mnhC1, mnhD1, mnhE1, mnhF1 and mnhG1.

It is found in the cell membrane. Functionally, mnh complex is a Na(+)/H(+) antiporter involved in Na(+) excretion. The chain is Na(+)/H(+) antiporter subunit E1 (mnhE1) from Staphylococcus aureus (strain bovine RF122 / ET3-1).